The following is a 467-amino-acid chain: Ergochrome gene cluster transcriptional coactivator CPUR_05432 (467 aa).

The HTH iclR-type domain occupies 109–179 (IAIQCEMLGS…RRGYVAHTPL (71 aa)). The H-T-H motif DNA-binding region spans 139–158 (IQDVANLSNVPEQQLAQMIG).

It is found in the nucleus. Its function is as follows. Transcriptional coactivator; part of the gene cluster responsible for the typical purple-black color of the ergot sclerotia. The ergochrome gene cluster produces several ergot pigments including the yellow ergochrome secalonic acid and its derivatives, as well as the red anthraquinones endocrocin and clavorubin. With CPUR_05433, coregulates the production of geodin. The chain is Ergochrome gene cluster transcriptional coactivator CPUR_05432 from Claviceps purpurea (strain 20.1) (Ergot fungus).